The sequence spans 298 residues: Small ribosomal subunit biogenesis GTPase RsgA 1 (298 aa).

The CP-type G domain maps to 63–224 (QTQLVRPPVA…VADTPGFSSY (162 aa)). Residues 112 to 115 (AKTD) and 167 to 175 (GQTGAGKST) each bind GTP. 4 residues coordinate Zn(2+): Cys-248, Cys-253, His-255, and Cys-261.

This sequence belongs to the TRAFAC class YlqF/YawG GTPase family. RsgA subfamily. Monomer. Associates with 30S ribosomal subunit, binds 16S rRNA. The cofactor is Zn(2+).

It localises to the cytoplasm. One of several proteins that assist in the late maturation steps of the functional core of the 30S ribosomal subunit. Helps release RbfA from mature subunits. May play a role in the assembly of ribosomal proteins into the subunit. Circularly permuted GTPase that catalyzes slow GTP hydrolysis, GTPase activity is stimulated by the 30S ribosomal subunit. The sequence is that of Small ribosomal subunit biogenesis GTPase RsgA 1 from Lactiplantibacillus plantarum (strain ATCC BAA-793 / NCIMB 8826 / WCFS1) (Lactobacillus plantarum).